A 130-amino-acid chain; its full sequence is Large ribosomal subunit protein bL20c (130 aa).

This sequence belongs to the bacterial ribosomal protein bL20 family.

The protein localises to the plastid. The protein resides in the chloroplast. Its function is as follows. Binds directly to 23S ribosomal RNA and is necessary for the in vitro assembly process of the 50S ribosomal subunit. It is not involved in the protein synthesizing functions of that subunit. The chain is Large ribosomal subunit protein bL20c from Fagopyrum esculentum subsp. ancestrale (Wild buckwheat).